We begin with the raw amino-acid sequence, 100 residues long: Small ribosomal subunit protein uS14c (100 aa).

This sequence belongs to the universal ribosomal protein uS14 family. As to quaternary structure, part of the 30S ribosomal subunit.

The protein localises to the plastid. It localises to the chloroplast. In terms of biological role, binds 16S rRNA, required for the assembly of 30S particles. This Morus indica (Mulberry) protein is Small ribosomal subunit protein uS14c.